A 551-amino-acid polypeptide reads, in one-letter code: Adenine deaminase (551 aa).

It belongs to the metallo-dependent hydrolases superfamily. Adenine deaminase family. Mn(2+) serves as cofactor.

It carries out the reaction adenine + H2O + H(+) = hypoxanthine + NH4(+). This is Adenine deaminase from Leuconostoc citreum (strain KM20).